Here is a 326-residue protein sequence, read N- to C-terminus: Neuferricin homolog (326 aa).

Residues 1 to 34 form the signal peptide; the sequence is MEKNRRKKDDAGVMTKTLAGVAALTFLVSFICSS. The Cytochrome b5 heme-binding domain occupies 98-197; sequence KHVFTPEQLH…KEYPLVGVVA (100 aa).

Belongs to the cytochrome b5 family. MAPR subfamily.

Its subcellular location is the secreted. Heme-binding protein. The chain is Neuferricin homolog from Caenorhabditis briggsae.